The chain runs to 496 residues: Probable cytosol aminopeptidase (496 aa).

2 residues coordinate Mn(2+): Lys-258 and Asp-263. The active site involves Lys-270. Mn(2+) is bound by residues Asp-281, Asp-340, and Glu-342. The active site involves Arg-344.

The protein belongs to the peptidase M17 family. It depends on Mn(2+) as a cofactor.

Its subcellular location is the cytoplasm. The enzyme catalyses Release of an N-terminal amino acid, Xaa-|-Yaa-, in which Xaa is preferably Leu, but may be other amino acids including Pro although not Arg or Lys, and Yaa may be Pro. Amino acid amides and methyl esters are also readily hydrolyzed, but rates on arylamides are exceedingly low.. It catalyses the reaction Release of an N-terminal amino acid, preferentially leucine, but not glutamic or aspartic acids.. Its function is as follows. Presumably involved in the processing and regular turnover of intracellular proteins. Catalyzes the removal of unsubstituted N-terminal amino acids from various peptides. This is Probable cytosol aminopeptidase from Helicobacter pylori (strain P12).